A 3108-amino-acid polypeptide reads, in one-letter code: Probable polyketide synthase 39 (3108 aa).

Residues 9 to 440 (DDDVAVIGIG…GSNVCLILSE (432 aa)) form the Ketosynthase family 3 (KS3) domain. Catalysis depends on for beta-ketoacyl synthase activity residues cysteine 181, histidine 320, and histidine 363. Residues 643–676 (GVSADIIIGHSLGEISSAYCSGMIDFQTLCYLTY) form an acyl/malonyl transferase region. Serine 653 (for acyl/malonyl transferase activity) is an active-site residue. Residues 939-1068 (HEKIKSEGPS…GNFSLFKHNI (130 aa)) form an N-terminal hotdog fold region. One can recognise a PKS/mFAS DH domain in the interval 939–1265 (HEKIKSEGPS…CTIAASNPDS (327 aa)). Histidine 980 acts as the Proton acceptor; for dehydratase activity in catalysis. The interval 1085–1265 (NFTSISKQDL…CTIAASNPDS (181 aa)) is C-terminal hotdog fold. Residue aspartate 1157 is the Proton donor; for dehydratase activity of the active site. The disordered stretch occupies residues 1375 to 1435 (NNNNNNNNNN…NNNNNNNNNN (61 aa)). Positions 2566–2643 (GNNEIIHSTI…QSIEIIKSAL (78 aa)) constitute a Carrier domain. An O-(pantetheine 4'-phosphoryl)serine modification is found at serine 2603. A helical transmembrane segment spans residues 2702-2722 (IFLTGSTGFLGAYLLMELIKM).

Pantetheine 4'-phosphate is required as a cofactor.

It is found in the membrane. Functionally, probable polyketide synthase. This is Probable polyketide synthase 39 (pks39) from Dictyostelium discoideum (Social amoeba).